The chain runs to 438 residues: Aspartate--tRNA(Asp/Asn) ligase (438 aa).

E176 is a binding site for L-aspartate. Residues 198-201 form an aspartate region; the sequence is QLYK. An L-aspartate-binding site is contributed by R220. ATP contacts are provided by residues 220 to 222, 228 to 230, and E361; these read RAE and RHL. Positions 361 and 364 each coordinate Mg(2+). Residues S364 and R368 each contribute to the L-aspartate site. 409–412 contacts ATP; that stretch reads GADR.

The protein belongs to the class-II aminoacyl-tRNA synthetase family. Type 2 subfamily. Homodimer. Requires Mg(2+) as cofactor.

Its subcellular location is the cytoplasm. The enzyme catalyses tRNA(Asx) + L-aspartate + ATP = L-aspartyl-tRNA(Asx) + AMP + diphosphate. Aspartyl-tRNA synthetase with relaxed tRNA specificity since it is able to aspartylate not only its cognate tRNA(Asp) but also tRNA(Asn). Reaction proceeds in two steps: L-aspartate is first activated by ATP to form Asp-AMP and then transferred to the acceptor end of tRNA(Asp/Asn). The polypeptide is Aspartate--tRNA(Asp/Asn) ligase (Methanococcus maripaludis (strain C7 / ATCC BAA-1331)).